Reading from the N-terminus, the 263-residue chain is Elongation factor Ts (263 aa).

The tract at residues 82-85 (TDFV) is involved in Mg(2+) ion dislocation from EF-Tu. Positions 221 to 251 (APPAVVEAPVAETPEPAVAETPEAKPAATES) are enriched in low complexity. Residues 221–263 (APPAVVEAPVAETPEPAVAETPEAKPAATESKPAKSKSAKKKK) form a disordered region. The segment covering 254 to 263 (AKSKSAKKKK) has biased composition (basic residues).

The protein belongs to the EF-Ts family.

It is found in the cytoplasm. Its function is as follows. Associates with the EF-Tu.GDP complex and induces the exchange of GDP to GTP. It remains bound to the aminoacyl-tRNA.EF-Tu.GTP complex up to the GTP hydrolysis stage on the ribosome. The sequence is that of Elongation factor Ts from Cyanothece sp. (strain PCC 7425 / ATCC 29141).